Consider the following 289-residue polypeptide: 33 kDa chaperonin (289 aa).

2 cysteine pairs are disulfide-bonded: cysteine 235–cysteine 237 and cysteine 268–cysteine 271.

The protein belongs to the HSP33 family. In terms of processing, under oxidizing conditions two disulfide bonds are formed involving the reactive cysteines. Under reducing conditions zinc is bound to the reactive cysteines and the protein is inactive.

It localises to the cytoplasm. Redox regulated molecular chaperone. Protects both thermally unfolding and oxidatively damaged proteins from irreversible aggregation. Plays an important role in the bacterial defense system toward oxidative stress. In Bacillus licheniformis (strain ATCC 14580 / DSM 13 / JCM 2505 / CCUG 7422 / NBRC 12200 / NCIMB 9375 / NCTC 10341 / NRRL NRS-1264 / Gibson 46), this protein is 33 kDa chaperonin.